The following is an 89-amino-acid chain: UPF0297 protein SUB1776 (89 aa).

The protein belongs to the UPF0297 family.

This chain is UPF0297 protein SUB1776, found in Streptococcus uberis (strain ATCC BAA-854 / 0140J).